A 730-amino-acid polypeptide reads, in one-letter code: Elongation factor 2 (730 aa).

The 210-residue stretch at 19-228 (QRIRNIGIVA…TGVSFKDVYD (210 aa)) folds into the tr-type G domain. GTP contacts are provided by residues 28–35 (AHIDHGKT), 94–98 (DTPGH), and 148–151 (NKVD). His596 carries the diphthamide modification.

This sequence belongs to the TRAFAC class translation factor GTPase superfamily. Classic translation factor GTPase family. EF-G/EF-2 subfamily.

It is found in the cytoplasm. In terms of biological role, catalyzes the GTP-dependent ribosomal translocation step during translation elongation. During this step, the ribosome changes from the pre-translocational (PRE) to the post-translocational (POST) state as the newly formed A-site-bound peptidyl-tRNA and P-site-bound deacylated tRNA move to the P and E sites, respectively. Catalyzes the coordinated movement of the two tRNA molecules, the mRNA and conformational changes in the ribosome. This is Elongation factor 2 from Methanosarcina acetivorans (strain ATCC 35395 / DSM 2834 / JCM 12185 / C2A).